We begin with the raw amino-acid sequence, 323 residues long: Transcription factor MYB56 (323 aa).

Positions 1–14 are enriched in basic and acidic residues; that stretch reads MNPNLLEKDLRGKE. Positions 1-84 are disordered; it reads MNPNLLEKDL…EKSLRMRGKS (84 aa). The span at 27–60 shows a compositional bias: polar residues; sequence NFRSLPNSHTAACKTSLNNPSISRNHPHNKSASV. Basic and acidic residues predominate over residues 66–78; the sequence is EHGNERGENEKSL. HTH myb-type domains follow at residues 88 to 139 and 140 to 194; these read TKVC…FNQL and DPRI…ARRT. DNA-binding regions (H-T-H motif) lie at residues 116 to 138 and 167 to 190; these read WNLI…WFNQ and WALI…HVIM. The disordered stretch occupies residues 192-217; sequence RRTRESQRQRQQPPPTLSRDAEMTVS.

In terms of assembly, forms homodimer. Interacts with the dephosphorylated active form of BES1 in the nucleus of quiescent center (QC) cells. Interacts with BPM1, BPM2, BPM3, BPM4, BPM5 and BPM6 at the promoter of FLOWERING LOCUS T (FT). As to expression, mostly expressed in flowers (at protein level) and siliques, and, to a lower extent, in roots, stems and leaves. Expressed in embryos (e.g. heart and torpedo stages) and cotyledons, and, at low levels, in roots and inflorescence. Accumulates specifically in root apical meristem quiescent center (QC) and vascular initial cells.

It localises to the nucleus. The protein resides in the cytoplasm. The protein localises to the cytosol. Functionally, acts as a cell-specific local repressor of quiescent center (QC) self-renewal by cell divisions in the primary root. Counteracts brassinosteroid (BR)-mediated cell division in the QC cells. Regulates maternally seed size, especially before the heart stage, promoting both endothelial cells expansion and cell number in the outer integument layer of the seed coat. Modulates the expression of genes involved in cell wall metabolism such as cell division and expansion. Negative regulator of flowering via the repression of FT transcription. This chain is Transcription factor MYB56, found in Arabidopsis thaliana (Mouse-ear cress).